The following is a 450-amino-acid chain: Phosphomethylpyrimidine synthase (450 aa).

Residues asparagine 80, methionine 109, tyrosine 138, histidine 173, 193–195 (SRG), 234–237 (DSLR), and glutamate 273 contribute to the substrate site. Position 277 (histidine 277) interacts with Zn(2+). Tyrosine 300 lines the substrate pocket. Zn(2+) is bound at residue histidine 341. [4Fe-4S] cluster-binding residues include cysteine 421, cysteine 424, and cysteine 429.

This sequence belongs to the ThiC family. As to quaternary structure, homodimer. It depends on [4Fe-4S] cluster as a cofactor.

The catalysed reaction is 5-amino-1-(5-phospho-beta-D-ribosyl)imidazole + S-adenosyl-L-methionine = 4-amino-2-methyl-5-(phosphooxymethyl)pyrimidine + CO + 5'-deoxyadenosine + formate + L-methionine + 3 H(+). It functions in the pathway cofactor biosynthesis; thiamine diphosphate biosynthesis. In terms of biological role, catalyzes the synthesis of the hydroxymethylpyrimidine phosphate (HMP-P) moiety of thiamine from aminoimidazole ribotide (AIR) in a radical S-adenosyl-L-methionine (SAM)-dependent reaction. The chain is Phosphomethylpyrimidine synthase from Campylobacter fetus subsp. fetus (strain 82-40).